The chain runs to 120 residues: Large ribosomal subunit protein uL14 (120 aa).

Belongs to the universal ribosomal protein uL14 family. Part of the 50S ribosomal subunit. Forms a cluster with proteins L3 and L19. In the 70S ribosome, L14 and L19 interact and together make contacts with the 16S rRNA in bridges B5 and B8.

Binds to 23S rRNA. Forms part of two intersubunit bridges in the 70S ribosome. In Karelsulcia muelleri (strain GWSS) (Sulcia muelleri), this protein is Large ribosomal subunit protein uL14.